The sequence spans 216 residues: MKQDSRFPNLFILDHPLIQHKLTHMRDKDTSTRTFRELLREITLLMGYEITRNLPITTRRVATPLVEVDAPVIAGKKLAIVPVLRAGIGMSDGLLDLVPSARVGHIGVYRADDHRPVEYLVRLPDLEDRVFILCDPMVATGYSAVHAVDVLKRRNVPAANIVFVALVAAPEGVQVFQDAHPDVKLYVASLDSHLNEHAYIVPGLGDAGDRLFGTKN.

5-phospho-alpha-D-ribose 1-diphosphate-binding positions include R85, R110, and 135 to 143; that span reads DPMVATGYS. Residues I200 and 205–207 contribute to the uracil site; that span reads GDA. D206 contributes to the 5-phospho-alpha-D-ribose 1-diphosphate binding site.

It belongs to the UPRTase family. The cofactor is Mg(2+).

It carries out the reaction UMP + diphosphate = 5-phospho-alpha-D-ribose 1-diphosphate + uracil. It functions in the pathway pyrimidine metabolism; UMP biosynthesis via salvage pathway; UMP from uracil: step 1/1. Its activity is regulated as follows. Allosterically activated by GTP. Functionally, catalyzes the conversion of uracil and 5-phospho-alpha-D-ribose 1-diphosphate (PRPP) to UMP and diphosphate. In Burkholderia vietnamiensis (strain G4 / LMG 22486) (Burkholderia cepacia (strain R1808)), this protein is Uracil phosphoribosyltransferase.